A 294-amino-acid polypeptide reads, in one-letter code: Tryptophan 2,3-dioxygenase (294 aa).

The segment at 1–20 (MSEFKGCPFSGAASEAGTKA) is disordered. Substrate contacts are provided by residues 63–67 (FIVQH), tyrosine 125, and arginine 129. Histidine 252 is a binding site for heme. Threonine 266 provides a ligand contact to substrate.

This sequence belongs to the tryptophan 2,3-dioxygenase family. Homotetramer. Heme is required as a cofactor.

It catalyses the reaction L-tryptophan + O2 = N-formyl-L-kynurenine. It participates in amino-acid degradation; L-tryptophan degradation via kynurenine pathway; L-kynurenine from L-tryptophan: step 1/2. In terms of biological role, heme-dependent dioxygenase that catalyzes the oxidative cleavage of the L-tryptophan (L-Trp) pyrrole ring and converts L-tryptophan to N-formyl-L-kynurenine. Catalyzes the oxidative cleavage of the indole moiety. This is Tryptophan 2,3-dioxygenase from Cupriavidus necator (strain ATCC 17699 / DSM 428 / KCTC 22496 / NCIMB 10442 / H16 / Stanier 337) (Ralstonia eutropha).